A 487-amino-acid polypeptide reads, in one-letter code: Glycogen synthase (487 aa).

Lys-19 provides a ligand contact to ADP-alpha-D-glucose.

This sequence belongs to the glycosyltransferase 1 family. Bacterial/plant glycogen synthase subfamily.

The enzyme catalyses [(1-&gt;4)-alpha-D-glucosyl](n) + ADP-alpha-D-glucose = [(1-&gt;4)-alpha-D-glucosyl](n+1) + ADP + H(+). It functions in the pathway glycan biosynthesis; glycogen biosynthesis. In terms of biological role, synthesizes alpha-1,4-glucan chains using ADP-glucose. The protein is Glycogen synthase of Moorella thermoacetica (strain ATCC 39073 / JCM 9320).